Consider the following 343-residue polypeptide: Putative kinase HI_0665 (343 aa).

D209 acts as the Proton acceptor in catalysis.

Belongs to the HipA Ser/Thr kinase family.

This chain is Putative kinase HI_0665, found in Haemophilus influenzae (strain ATCC 51907 / DSM 11121 / KW20 / Rd).